The sequence spans 204 residues: N-(5'-phosphoribosyl)anthranilate isomerase (204 aa).

It belongs to the TrpF family.

It catalyses the reaction N-(5-phospho-beta-D-ribosyl)anthranilate = 1-(2-carboxyphenylamino)-1-deoxy-D-ribulose 5-phosphate. It functions in the pathway amino-acid biosynthesis; L-tryptophan biosynthesis; L-tryptophan from chorismate: step 3/5. This Pseudomonas fluorescens (strain Pf0-1) protein is N-(5'-phosphoribosyl)anthranilate isomerase.